A 334-amino-acid polypeptide reads, in one-letter code: Fe-S cluster assembly protein DRE2 (334 aa).

Positions 1–131 are N-terminal SAM-like domain; sequence MASTKTGLVL…ASIKAEPVAV (131 aa). Residues 132–228 form a linker region; the sequence is PLRNHKKTTT…EDELVDENEM (97 aa). A disordered region spans residues 135 to 229; it reads NHKKTTTPGT…DELVDENEMR (95 aa). Residues 140-150 show a composition bias toward low complexity; the sequence is TTPGTTTTAKK. Composition is skewed to acidic residues over residues 182-192 and 215-227; these read DSEDEDEESEG and DSIE…DENE. Residues C238, C249, C252, and C254 each contribute to the [2Fe-2S] cluster site. The interval 238-254 is fe-S binding site A; that stretch reads CGKSKTRRRKACKDCTC. [4Fe-4S] cluster-binding residues include C297, C300, C308, and C311. 2 consecutive short sequence motifs (cx2C motif) follow at residues 297–300 and 308–311; these read CGSC and CSGC. A fe-S binding site B region spans residues 297-311; it reads CGSCTLGDAFRCSGC.

The protein belongs to the anamorsin family. In terms of assembly, monomer. Interacts with TAH18. Interacts with MIA40. Requires [2Fe-2S] cluster as cofactor. [4Fe-4S] cluster is required as a cofactor.

Its subcellular location is the cytoplasm. It is found in the mitochondrion intermembrane space. Functionally, component of the cytosolic iron-sulfur (Fe-S) protein assembly (CIA) machinery required for the maturation of extramitochondrial Fe-S proteins. Part of an electron transfer chain functioning in an early step of cytosolic Fe-S biogenesis, facilitating the de novo assembly of a [4Fe-4S] cluster on the scaffold complex CFD1-NBP35. Electrons are transferred to DRE2 from NADPH via the FAD- and FMN-containing protein TAH18. TAH18-DRE2 are also required for the assembly of the diferric tyrosyl radical cofactor of ribonucleotide reductase (RNR), probably by providing electrons for reduction during radical cofactor maturation in the catalytic small subunit RNR2. This is Fe-S cluster assembly protein DRE2 from Zygosaccharomyces rouxii (strain ATCC 2623 / CBS 732 / NBRC 1130 / NCYC 568 / NRRL Y-229).